The primary structure comprises 1053 residues: 3-hydroxy-3-methylglutaryl-coenzyme A reductase (1053 aa).

Residues 1-8 lie on the Cytoplasmic side of the membrane; the sequence is MIYKLAAR. Residues 9 to 29 form a helical membrane-spanning segment; sequence YPIQVIAIVGILVSMAYFSFL. At 30-203 the chain is on the lumenal side; it reads EALTQEDFPV…LKIASQASKT (174 aa). N-linked (GlcNAc...) asparagine glycosylation is present at asparagine 137. Residues 204–224 traverse the membrane as a helical segment; sequence ELLIVGTAYACMLISIVSLYL. The SSD domain maps to 204–365; the sequence is ELLIVGTAYA…FSFFVAILTL (162 aa). Topologically, residues 225-232 are cytoplasmic; sequence KMRRLGSK. A helical transmembrane segment spans residues 233 to 253; sequence FWLFFSVLLSTLFSVQFAMTL. Over 254-258 the chain is Lumenal; sequence VRASG. The helical transmembrane segment at 259–279 threads the bilayer; the sequence is VRISLVSLIESLPFLINVVAL. The Cytoplasmic segment spans residues 280-320; it reads DKAAELTRQVITRCSVSDSHSPMHEDIAKACRNAAPPILRH. 2 helical membrane-spanning segments follow: residues 321 to 341 and 342 to 362; these read FSFG…IKQF and FLFA…FVAI. Topologically, residues 363–417 are cytoplasmic; the sequence is LTLKLEMRRYNAKDDVRKVLIEEGLSESTARHVADGNDSSATTSAGSRYFKVRYG. A helical transmembrane segment spans residues 418-438; the sequence is TKIILFIFIAFNLFELCSIPF. The Lumenal portion of the chain corresponds to 439–526; the sequence is KHYAATSAAA…NNWSHYISAS (88 aa). N-linked (GlcNAc...) asparagine glycosylation is present at asparagine 518. Residues 527 to 547 form a helical membrane-spanning segment; that stretch reads FLSKWIVCALSLSIAVNVFLL. The Cytoplasmic portion of the chain corresponds to 548–1053; the sequence is NAARLNSIKE…KSVNSRVPGR (506 aa). Glutamate 712 acts as the Charge relay system in catalysis. 718–724 contacts CoA; it reads STMRGCK. NADP(+)-binding positions include 779–781 and 806–814; these read SRF and DAMGMNMIS. The active-site Charge relay system is lysine 846. 875 to 877 provides a ligand contact to CoA; sequence VLK. Residue aspartate 922 is the Charge relay system of the active site. 1017 to 1018 lines the CoA pocket; the sequence is SH. Histidine 1018 (proton donor) is an active-site residue. 1022 to 1023 lines the NADP(+) pocket; the sequence is NR. The residue at position 1024 (serine 1024) is a Phosphoserine. A Phosphothreonine modification is found at threonine 1028. The tract at residues 1028 to 1053 is disordered; that stretch reads TPAMDSSAKKPATDALKSVNSRVPGR.

This sequence belongs to the HMG-CoA reductase family.

It localises to the endoplasmic reticulum membrane. Its subcellular location is the nucleus envelope. The catalysed reaction is (R)-mevalonate + 2 NADP(+) + CoA = (3S)-3-hydroxy-3-methylglutaryl-CoA + 2 NADPH + 2 H(+). It participates in metabolic intermediate biosynthesis; (R)-mevalonate biosynthesis; (R)-mevalonate from acetyl-CoA: step 3/3. Functionally, part of the first module of ergosterol biosynthesis pathway that includes the early steps of the pathway, conserved across all eukaryotes, and which results in the formation of mevalonate from acetyl-coenzyme A (acetyl-CoA). Hmg1 catalyzes the reduction of hydroxymethylglutaryl-CoA (HMG-CoA) to mevalonate. The first module starts with the action of the cytosolic acetyl-CoA acetyltransferase eg10 that catalyzes the formation of acetoacetyl-CoA. The hydroxymethylglutaryl-CoA synthases erg13 then condenses acetyl-CoA with acetoacetyl-CoA to form HMG-CoA. The rate-limiting step of the early module is the reduction to mevalonate by the 3-hydroxy-3-methylglutaryl-coenzyme A (HMG-CoA) reductases hcs1. This is 3-hydroxy-3-methylglutaryl-coenzyme A reductase from Schizosaccharomyces pombe (strain 972 / ATCC 24843) (Fission yeast).